The chain runs to 234 residues: Purine nucleoside phosphorylase DeoD-type (234 aa).

Residue histidine 4 participates in a purine D-ribonucleoside binding. Phosphate contacts are provided by residues glycine 20, arginine 24, arginine 43, and 87–90; that span reads RIGS. A purine D-ribonucleoside contacts are provided by residues 179–181 and 203–204; these read DME and SD. The active-site Proton donor is aspartate 204.

It belongs to the PNP/UDP phosphorylase family. Homohexamer; trimer of homodimers.

It catalyses the reaction a purine D-ribonucleoside + phosphate = a purine nucleobase + alpha-D-ribose 1-phosphate. The catalysed reaction is a purine 2'-deoxy-D-ribonucleoside + phosphate = a purine nucleobase + 2-deoxy-alpha-D-ribose 1-phosphate. In terms of biological role, catalyzes the reversible phosphorolytic breakdown of the N-glycosidic bond in the beta-(deoxy)ribonucleoside molecules, with the formation of the corresponding free purine bases and pentose-1-phosphate. This chain is Purine nucleoside phosphorylase DeoD-type, found in Shewanella oneidensis (strain ATCC 700550 / JCM 31522 / CIP 106686 / LMG 19005 / NCIMB 14063 / MR-1).